Consider the following 171-residue polypeptide: MDKKSLYKYLLLRSTGDMHKAKSPTIMTRVTNNVYLGNYKNAMDAPSSEVKFKYVLNLTMDKYTLPNSNINIIHIPLVDDTTTDISKYFDDVTAFLSKCDQRNEPVLVHCAAGVNRSGAMILAYLMSKNKESLPMLYFLYVYHSMRDLRGAFVENPSFKRQIIEKYVIDKN.

The interval 1–27 (MDKKSLYKYLLLRSTGDMHKAKSPTIM) is dimerization. The 149-residue stretch at 23 to 171 (SPTIMTRVTN…IIEKYVIDKN (149 aa)) folds into the Tyrosine-protein phosphatase domain. The active-site Phosphocysteine intermediate is Cys-110.

This sequence belongs to the protein-tyrosine phosphatase family. Non-receptor class dual specificity subfamily. In terms of assembly, homodimer.

It localises to the virion. The protein resides in the host cytoplasm. It catalyses the reaction O-phospho-L-tyrosyl-[protein] + H2O = L-tyrosyl-[protein] + phosphate. The catalysed reaction is O-phospho-L-seryl-[protein] + H2O = L-seryl-[protein] + phosphate. Serine/tyrosine phosphatase which down-regulates cellular antiviral response by dephosphorylating activated host STAT1 and blocking interferon (IFN)-stimulated innate immune responses. Dephosphorylates the OPG144 protein. In Bos taurus (Bovine), this protein is Dual specificity protein phosphatase OPG106 (OPG106).